The sequence spans 110 residues: Lichenan-specific phosphotransferase enzyme IIA component (110 aa).

Positions 3–101 constitute a PTS EIIA type-3 domain; it reads EEMEQIIFQI…AAEIIELYEK (99 aa). Catalysis depends on His-77, which acts as the Tele-phosphohistidine intermediate; by HPr.

The protein localises to the cytoplasm. In terms of biological role, the phosphoenolpyruvate-dependent sugar phosphotransferase system (PTS), a major carbohydrate active -transport system, catalyzes the phosphorylation of incoming sugar substrates concomitant with their translocation across the cell membrane. This system is involved in lichenan transport. This chain is Lichenan-specific phosphotransferase enzyme IIA component (licA), found in Bacillus subtilis (strain 168).